The following is a 331-amino-acid chain: 4-hydroxythreonine-4-phosphate dehydrogenase (331 aa).

Positions 136 and 137 each coordinate substrate. Residues H166, H211, and H266 each contribute to the a divalent metal cation site. Substrate-binding residues include K274, N283, and R292.

Belongs to the PdxA family. In terms of assembly, homodimer. Zn(2+) is required as a cofactor. Mg(2+) serves as cofactor. The cofactor is Co(2+).

The protein localises to the cytoplasm. The catalysed reaction is 4-(phosphooxy)-L-threonine + NAD(+) = 3-amino-2-oxopropyl phosphate + CO2 + NADH. Its pathway is cofactor biosynthesis; pyridoxine 5'-phosphate biosynthesis; pyridoxine 5'-phosphate from D-erythrose 4-phosphate: step 4/5. Functionally, catalyzes the NAD(P)-dependent oxidation of 4-(phosphooxy)-L-threonine (HTP) into 2-amino-3-oxo-4-(phosphooxy)butyric acid which spontaneously decarboxylates to form 3-amino-2-oxopropyl phosphate (AHAP). This chain is 4-hydroxythreonine-4-phosphate dehydrogenase, found in Thioalkalivibrio sulfidiphilus (strain HL-EbGR7).